The chain runs to 371 residues: Riboflavin biosynthesis protein RibD (371 aa).

Residues 1–150 form a deaminase region; it reads MEVSSEQQLF…QPYLHQRETG (150 aa). The CMP/dCMP-type deaminase domain occupies 6–128; it reads EQQLFFMREA…RLKEAGISVY (123 aa). His-55 lines the Zn(2+) pocket. The Proton donor role is filled by Glu-57. Zn(2+) contacts are provided by Cys-80 and Cys-89. The reductase stretch occupies residues 151-371; sequence LPWVVMKTAA…CFECVGREDG (221 aa). Ala-159 contributes to the NADP(+) binding site. Ser-173 contacts substrate. Trp-175 provides a ligand contact to NADP(+). Substrate is bound at residue Arg-189. Residues Thr-201 and Asp-205 each contribute to the NADP(+) site. Positions 209 and 212 each coordinate substrate. Ser-230 lines the NADP(+) pocket. Position 299 (Glu-299) interacts with substrate. Position 301-307 (301-307) interacts with NADP(+); the sequence is GARLHSA.

The protein in the N-terminal section; belongs to the cytidine and deoxycytidylate deaminase family. It in the C-terminal section; belongs to the HTP reductase family. It depends on Zn(2+) as a cofactor.

The catalysed reaction is 2,5-diamino-6-hydroxy-4-(5-phosphoribosylamino)-pyrimidine + H2O + H(+) = 5-amino-6-(5-phospho-D-ribosylamino)uracil + NH4(+). It catalyses the reaction 5-amino-6-(5-phospho-D-ribitylamino)uracil + NADP(+) = 5-amino-6-(5-phospho-D-ribosylamino)uracil + NADPH + H(+). The protein operates within cofactor biosynthesis; riboflavin biosynthesis; 5-amino-6-(D-ribitylamino)uracil from GTP: step 2/4. It functions in the pathway cofactor biosynthesis; riboflavin biosynthesis; 5-amino-6-(D-ribitylamino)uracil from GTP: step 3/4. Functionally, converts 2,5-diamino-6-(ribosylamino)-4(3h)-pyrimidinone 5'-phosphate into 5-amino-6-(ribosylamino)-2,4(1h,3h)-pyrimidinedione 5'-phosphate. The polypeptide is Riboflavin biosynthesis protein RibD (ribD) (Chlamydia muridarum (strain MoPn / Nigg)).